Consider the following 146-residue polypeptide: Ribonuclease H (146 aa).

In terms of domain architecture, RNase H type-1 spans 1 to 143 (MRKKIIIYTD…CDYLARQAIK (143 aa)). Mg(2+)-binding residues include D10, E48, D70, and D135.

It belongs to the RNase H family. As to quaternary structure, monomer. Mg(2+) serves as cofactor.

It localises to the cytoplasm. The catalysed reaction is Endonucleolytic cleavage to 5'-phosphomonoester.. Endonuclease that specifically degrades the RNA of RNA-DNA hybrids. The chain is Ribonuclease H from Prosthecochloris aestuarii (strain DSM 271 / SK 413).